Here is a 250-residue protein sequence, read N- to C-terminus: ATP synthase subunit a (250 aa).

The next 6 helical transmembrane spans lie at 27 to 47 (FTNA…FLTF), 85 to 105 (FFPL…VGLI), 115 to 135 (LIVT…YGFV), 141 to 161 (FLHL…LVVI), 181 to 201 (MLAG…LASA), and 223 to 243 (ELLV…IYLN).

The protein belongs to the ATPase A chain family. In terms of assembly, F-type ATPases have 2 components, CF(1) - the catalytic core - and CF(0) - the membrane proton channel. CF(1) has five subunits: alpha(3), beta(3), gamma(1), delta(1), epsilon(1). CF(0) has three main subunits: a(1), b(2) and c(9-12). The alpha and beta chains form an alternating ring which encloses part of the gamma chain. CF(1) is attached to CF(0) by a central stalk formed by the gamma and epsilon chains, while a peripheral stalk is formed by the delta and b chains.

It localises to the cell inner membrane. Functionally, key component of the proton channel; it plays a direct role in the translocation of protons across the membrane. This is ATP synthase subunit a from Xanthobacter autotrophicus (strain ATCC BAA-1158 / Py2).